Reading from the N-terminus, the 842-residue chain is Alpha-glucan phosphorylase, H isozyme (842 aa).

At Lys688 the chain carries N6-(pyridoxal phosphate)lysine.

The protein belongs to the glycogen phosphorylase family. It depends on pyridoxal 5'-phosphate as a cofactor.

The protein resides in the cytoplasm. The enzyme catalyses [(1-&gt;4)-alpha-D-glucosyl](n) + phosphate = [(1-&gt;4)-alpha-D-glucosyl](n-1) + alpha-D-glucose 1-phosphate. In terms of biological role, phosphorylase is an important allosteric enzyme in carbohydrate metabolism. Enzymes from different sources differ in their regulatory mechanisms and in their natural substrates. However, all known phosphorylases share catalytic and structural properties. Functionally, the H isoform exhibits higher affinity for branched polyglucans such as soluble starch or glycogen. The sequence is that of Alpha-glucan phosphorylase, H isozyme from Vicia faba (Broad bean).